The sequence spans 169 residues: Cysteine synthase B (169 aa).

Lysine 45 bears the N6-(pyridoxal phosphate)lysine mark. Asparagine 75 contacts pyridoxal 5'-phosphate. The disordered stretch occupies residues 146–169 (ANGDNPEAHYTSTGPEIWRQTGGT).

Belongs to the cysteine synthase/cystathionine beta-synthase family. Pyridoxal 5'-phosphate is required as a cofactor.

It catalyses the reaction O-acetyl-L-serine + hydrogen sulfide = L-cysteine + acetate. The protein operates within amino-acid biosynthesis; L-cysteine biosynthesis; L-cysteine from L-serine: step 2/2. The polypeptide is Cysteine synthase B (cysM) (Pseudomonas syringae pv. syringae).